Here is a 429-residue protein sequence, read N- to C-terminus: 26S proteasome regulatory subunit 6A homolog (429 aa).

The disordered stretch occupies residues 1 to 21 (MSSPPPAAAAAMAVDDADDDQ). 217–224 (GPPGTGKT) contributes to the ATP binding site.

It belongs to the AAA ATPase family.

The protein localises to the cytoplasm. The protein resides in the nucleus. Functionally, the 26S proteasome is involved in the ATP-dependent degradation of ubiquitinated proteins. The regulatory (or ATPase) complex confers ATP dependency and substrate specificity to the 26S complex. This is 26S proteasome regulatory subunit 6A homolog (TBP1) from Oryza sativa subsp. japonica (Rice).